The following is a 130-amino-acid chain: MNYTVLVIGPPYSTQNSTSAFLFSRAVILNHHKLLSIFFYCDGALNANKFISPNFNECNLVEEWTWLHNKYLVKLCVCVSAALRRGVIDVVSNTKQNKNIKVGNLKSSFFLTGLGEFSNYLKISDRVIQF.

Residue Cys78 is the Cysteine persulfide intermediate of the active site.

Belongs to the DsrE/TusD family. As to quaternary structure, heterohexamer, formed by a dimer of trimers. The hexameric TusBCD complex contains 2 copies each of TusB, TusC and TusD. The TusBCD complex interacts with TusE.

It localises to the cytoplasm. In terms of biological role, part of a sulfur-relay system required for 2-thiolation of 5-methylaminomethyl-2-thiouridine (mnm(5)s(2)U) at tRNA wobble positions. Accepts sulfur from TusA and transfers it in turn to TusE. In Buchnera aphidicola subsp. Baizongia pistaciae (strain Bp), this protein is Sulfurtransferase TusD.